A 225-amino-acid polypeptide reads, in one-letter code: Leucyl/phenylalanyl-tRNA--protein transferase (225 aa).

Belongs to the L/F-transferase family.

Its subcellular location is the cytoplasm. The enzyme catalyses N-terminal L-lysyl-[protein] + L-leucyl-tRNA(Leu) = N-terminal L-leucyl-L-lysyl-[protein] + tRNA(Leu) + H(+). It carries out the reaction N-terminal L-arginyl-[protein] + L-leucyl-tRNA(Leu) = N-terminal L-leucyl-L-arginyl-[protein] + tRNA(Leu) + H(+). It catalyses the reaction L-phenylalanyl-tRNA(Phe) + an N-terminal L-alpha-aminoacyl-[protein] = an N-terminal L-phenylalanyl-L-alpha-aminoacyl-[protein] + tRNA(Phe). Functions in the N-end rule pathway of protein degradation where it conjugates Leu, Phe and, less efficiently, Met from aminoacyl-tRNAs to the N-termini of proteins containing an N-terminal arginine or lysine. In Nitrobacter hamburgensis (strain DSM 10229 / NCIMB 13809 / X14), this protein is Leucyl/phenylalanyl-tRNA--protein transferase.